The following is a 305-amino-acid chain: Methionyl-tRNA formyltransferase (305 aa).

Ser108 to Pro111 contributes to the (6S)-5,6,7,8-tetrahydrofolate binding site.

This sequence belongs to the Fmt family.

The enzyme catalyses L-methionyl-tRNA(fMet) + (6R)-10-formyltetrahydrofolate = N-formyl-L-methionyl-tRNA(fMet) + (6S)-5,6,7,8-tetrahydrofolate + H(+). Its function is as follows. Attaches a formyl group to the free amino group of methionyl-tRNA(fMet). The formyl group appears to play a dual role in the initiator identity of N-formylmethionyl-tRNA by promoting its recognition by IF2 and preventing the misappropriation of this tRNA by the elongation apparatus. This is Methionyl-tRNA formyltransferase from Thermus thermophilus (strain ATCC BAA-163 / DSM 7039 / HB27).